Consider the following 217-residue polypeptide: Protein-L-isoaspartate O-methyltransferase (217 aa).

The active site involves Ser62.

The protein belongs to the methyltransferase superfamily. L-isoaspartyl/D-aspartyl protein methyltransferase family.

It localises to the cytoplasm. The enzyme catalyses [protein]-L-isoaspartate + S-adenosyl-L-methionine = [protein]-L-isoaspartate alpha-methyl ester + S-adenosyl-L-homocysteine. Catalyzes the methyl esterification of L-isoaspartyl residues in peptides and proteins that result from spontaneous decomposition of normal L-aspartyl and L-asparaginyl residues. It plays a role in the repair and/or degradation of damaged proteins. In Trichlorobacter lovleyi (strain ATCC BAA-1151 / DSM 17278 / SZ) (Geobacter lovleyi), this protein is Protein-L-isoaspartate O-methyltransferase.